We begin with the raw amino-acid sequence, 287 residues long: Ribonuclease Z (287 aa).

His64, His66, Asp68, His69, His124, Asp191, and His250 together coordinate Zn(2+). Residue Asp68 is the Proton acceptor of the active site.

Belongs to the RNase Z family. Homodimer. Requires Zn(2+) as cofactor.

The enzyme catalyses Endonucleolytic cleavage of RNA, removing extra 3' nucleotides from tRNA precursor, generating 3' termini of tRNAs. A 3'-hydroxy group is left at the tRNA terminus and a 5'-phosphoryl group is left at the trailer molecule.. Zinc phosphodiesterase, which displays some tRNA 3'-processing endonuclease activity. Probably involved in tRNA maturation, by removing a 3'-trailer from precursor tRNA. This chain is Ribonuclease Z, found in Pyrobaculum islandicum (strain DSM 4184 / JCM 9189 / GEO3).